The primary structure comprises 591 residues: Splicing factor U2af large subunit A (591 aa).

The tract at residues 1 to 215 is disordered; the sequence is MAEHDAPPES…QSKRMSGFDQ (215 aa). Over residues 27 to 36 the composition is skewed to polar residues; it reads SPQQDAQPLS. Basic and acidic residues-rich tracts occupy residues 37–79 and 157–191; these read SRDR…SRDR and RERS…DRDG. RRM domains lie at 272–355 and 392–470; these read RRVY…RPTD and DRIF…RANQ.

It belongs to the splicing factor SR family.

It is found in the nucleus. In terms of biological role, necessary for the splicing of pre-mRNA. The polypeptide is Splicing factor U2af large subunit A (U2AF65A) (Triticum aestivum (Wheat)).